Consider the following 204-residue polypeptide: Matrix-remodeling-associated protein 7 (204 aa).

Residues 7 to 27 (LLAALPALATALALLLAWLLV) form a helical membrane-spanning segment. The tract at residues 32–148 (AASPEPARAP…FSFKYSPGKL (117 aa)) is disordered. Pro residues predominate over residues 38–47 (ARAPPEPAPP). The segment covering 63–103 (EPAASPAGPEEPGEPAGLGELGEPAGPGEPEGPGDPAAAPA) has biased composition (low complexity). Residues 110-126 (VEARQEEEQDLDGEKGP) show a composition bias toward basic and acidic residues. S191 carries the phosphoserine modification.

It is found in the membrane. The protein is Matrix-remodeling-associated protein 7 (MXRA7) of Homo sapiens (Human).